Consider the following 99-residue polypeptide: Large ribosomal subunit protein eL21 (99 aa).

Polar residues predominate over residues 1-14; sequence MPNSNGPLSNSGGK. The interval 1–38 is disordered; that stretch reads MPNSNGPLSNSGGKLQNDPRDRGTSPPQRAIADYDDGE.

Belongs to the eukaryotic ribosomal protein eL21 family.

The chain is Large ribosomal subunit protein eL21 from Halobacterium salinarum (strain ATCC 29341 / DSM 671 / R1).